The sequence spans 922 residues: Lysine-specific demethylase 4 (922 aa).

Residues 1–15 are compositionally biased toward polar residues; sequence MASAATTTHFPSSRI. Disordered regions lie at residues 1-21 and 42-61; these read MASA…EPCA and SSSC…MFTD. One can recognise a JmjN domain in the interval 87–130; the sequence is VLTFYPTMREFKNFSQYIKKIEQNGGHLKAGIAKIVAPEGWTPR. Y213 contacts 2-oxoglutarate. In terms of domain architecture, JmjC spans 223–388; sequence DAQVEEWNMN…YGKDAVLCDC (166 aa). Fe cation is bound by residues H265 and E267. Residues N275 and K283 each coordinate 2-oxoglutarate. Residues C314 and H320 each coordinate Zn(2+). K321 is a binding site for 2-oxoglutarate. H356 is a binding site for Fe cation. Positions 386 and 388 each coordinate Zn(2+). The disordered stretch occupies residues 435-475; it reads KRRQSLADASKIAKRARLGASSTATDSDGSSGSSGSEEATE. The segment covering 453–475 has biased composition (low complexity); that stretch reads GASSTATDSDGSSGSSGSEEATE. A C2HC pre-PHD-type zinc finger spans residues 639-675; sequence TTSCQLCELRGGALIPCQIGTDSTWAHVACALFNRRA. A PHD-type; degenerate zinc finger spans residues 723–783; the sequence is WECVVCHRTD…GVVMICHKHE (61 aa).

The protein belongs to the JHDM3 histone demethylase family. Fe(2+) serves as cofactor.

Its subcellular location is the nucleus. The enzyme catalyses N(6),N(6),N(6)-trimethyl-L-lysyl(9)-[histone H3] + 2 2-oxoglutarate + 2 O2 = N(6)-methyl-L-lysyl(9)-[histone H3] + 2 formaldehyde + 2 succinate + 2 CO2. It carries out the reaction N(6),N(6),N(6)-trimethyl-L-lysyl(36)-[histone H3] + 2 2-oxoglutarate + 2 O2 = N(6)-methyl-L-lysyl(36)-[histone H3] + 2 formaldehyde + 2 succinate + 2 CO2. Its function is as follows. Histone demethylase that specifically demethylates 'Lys-9' and 'Lys-36' residues of histone H3, thereby playing a central role in histone code. Demethylation of Lys residue generates formaldehyde and succinate. Involved in the negative regulation of lifespan in a germline-dependent fashion. The sequence is that of Lysine-specific demethylase 4 (jmjd-2) from Caenorhabditis elegans.